The following is a 74-amino-acid chain: uncharacterized protein (74 aa).

This is an uncharacterized protein from Schizosaccharomyces pombe (strain 972 / ATCC 24843) (Fission yeast).